The primary structure comprises 353 residues: MTNEFAIPRSVEWKETYIRILNQQKLPDVTEYVELETKEDVFDAIVTLKVRGAPAIGITAAFGLALSAKSFEARDLSDFRRQFADVKTYLNSSRPTAVNLAWALDRLTDSIRDAISINEAKTTLVHEAIQIQIEDEETCRMIGQNALHLFKKGDQIMTICNAGSIATSRYGTALAPFYLAKQKDLGLHIYACETRPVLQGSRLTAWELMQGGIDVTLITDSMAAHTMKEKHISAVIVGADRIAKNGDTANKIGTYGLAILANAFQIPFFVAAPLSTFDLQIENGDQIPIEERDPDEVRQISGIRTAPEDVPVFNPAFDITPGSLISGIITEKGIVTGSYTEEIEQLFADCQLS.

Residues 51-53, R94, and Q199 contribute to the substrate site; that span reads RGA. D240 (proton donor) is an active-site residue. 250-251 provides a ligand contact to substrate; it reads NK.

This sequence belongs to the eIF-2B alpha/beta/delta subunits family. MtnA subfamily. As to quaternary structure, homodimer.

The enzyme catalyses 5-(methylsulfanyl)-alpha-D-ribose 1-phosphate = 5-(methylsulfanyl)-D-ribulose 1-phosphate. It participates in amino-acid biosynthesis; L-methionine biosynthesis via salvage pathway; L-methionine from S-methyl-5-thio-alpha-D-ribose 1-phosphate: step 1/6. Functionally, catalyzes the interconversion of methylthioribose-1-phosphate (MTR-1-P) into methylthioribulose-1-phosphate (MTRu-1-P). The chain is Methylthioribose-1-phosphate isomerase from Bacillus velezensis (strain DSM 23117 / BGSC 10A6 / LMG 26770 / FZB42) (Bacillus amyloliquefaciens subsp. plantarum).